Consider the following 476-residue polypeptide: Proline--tRNA ligase (476 aa).

This sequence belongs to the class-II aminoacyl-tRNA synthetase family. ProS type 3 subfamily. As to quaternary structure, homodimer.

The protein localises to the cytoplasm. It catalyses the reaction tRNA(Pro) + L-proline + ATP = L-prolyl-tRNA(Pro) + AMP + diphosphate. Its function is as follows. Catalyzes the attachment of proline to tRNA(Pro) in a two-step reaction: proline is first activated by ATP to form Pro-AMP and then transferred to the acceptor end of tRNA(Pro). This Cenarchaeum symbiosum (strain A) protein is Proline--tRNA ligase.